The chain runs to 223 residues: Adenylate kinase (223 aa).

10 to 15 (GSGKGT) contacts ATP. The interval 30–59 (ESGAIFREHIGGGTELGMKAKGYIDKGELV) is NMP. AMP-binding positions include Ser31, Arg36, 57 to 59 (ELV), 84 to 87 (GFPR), and Gln91. Positions 125 to 164 (GRRLCANDPNHPNNIFIDAIKPNGDKCRVCGGDLKTRSDD) are LID. Arg126 serves as a coordination point for ATP. Residues Arg161 and Arg173 each contribute to the AMP site. Gly209 contributes to the ATP binding site.

This sequence belongs to the adenylate kinase family. As to quaternary structure, monomer.

The protein resides in the cytoplasm. The catalysed reaction is AMP + ATP = 2 ADP. The protein operates within purine metabolism; AMP biosynthesis via salvage pathway; AMP from ADP: step 1/1. Its function is as follows. Catalyzes the reversible transfer of the terminal phosphate group between ATP and AMP. Plays an important role in cellular energy homeostasis and in adenine nucleotide metabolism. The protein is Adenylate kinase of Solidesulfovibrio magneticus (strain ATCC 700980 / DSM 13731 / RS-1) (Desulfovibrio magneticus).